The sequence spans 119 residues: MARVKRGVTAHAKHKKVYKLAKGFRGRRKNTIRTAKAAVDKAGQYAFRDRKRKKRTFRALWIQRINAAVRPLGMTYSVFINGLAKSGVMVDRKVLSDLAITEPAAFLAIAEKAKAALAA.

Belongs to the bacterial ribosomal protein bL20 family.

Its function is as follows. Binds directly to 23S ribosomal RNA and is necessary for the in vitro assembly process of the 50S ribosomal subunit. It is not involved in the protein synthesizing functions of that subunit. This chain is Large ribosomal subunit protein bL20, found in Rhodopseudomonas palustris (strain BisB18).